The primary structure comprises 367 residues: MNTFGQQTSNPHAQDLLDMAKYYDHFNHYHQQQNQQLPQRPAAPPAPGYGLNEFSPPTANPYLWLNGPAINSSPYLNGGSGSPYFPTGYGGGQRQFLPPSSGFGVADFPWLSIPNQADLLKMVRPPYSYSSLIAMSIQNTPDKKLTLSQIYNYVAENFPFYKKSKAGWQNSIRHNLSLNDCFKKVARDDNDPGKGNYWTLDPNCEKMFDNGNFRRKRKRKSEIVGAGFDEESNEDKKPLALKSLGPDSPGGASVVLEQSSYTAPEGKNKSPVGSVARDSSHCFTNFASNMNALINGRAPRQFSAGHGDFSNSRHYLAELASCPISSPPISEAQTKVACYPSKQQNSLCTSVLNPFSLNHVYSREGEV.

Residues 31-40 (QQQNQQLPQR) are compositionally biased toward low complexity. A disordered region spans residues 31-51 (QQQNQQLPQRPAAPPAPGYGL). The segment at residues 124 to 218 (RPPYSYSSLI…DNGNFRRKRK (95 aa)) is a DNA-binding region (fork-head). Residues 224 to 254 (VGAGFDEESNEDKKPLALKSLGPDSPGGASV) are disordered.

The protein localises to the nucleus. Functionally, possible transcriptional activator. The chain is Forkhead box protein I2-B (foxi2-b) from Xenopus laevis (African clawed frog).